Reading from the N-terminus, the 312-residue chain is Malate dehydrogenase (312 aa).

NAD(+) contacts are provided by residues 7-13 and Asp-34; that span reads GAAGGIG. Substrate contacts are provided by Arg-81 and Arg-87. Residues Asn-94 and 117 to 119 contribute to the NAD(+) site; that span reads ITN. 2 residues coordinate substrate: Asn-119 and Arg-153. His-177 serves as the catalytic Proton acceptor. An NAD(+)-binding site is contributed by Met-227.

This sequence belongs to the LDH/MDH superfamily. MDH type 1 family. Homodimer.

The enzyme catalyses (S)-malate + NAD(+) = oxaloacetate + NADH + H(+). Catalyzes the reversible oxidation of malate to oxaloacetate. The chain is Malate dehydrogenase from Escherichia fergusonii (strain ATCC 35469 / DSM 13698 / CCUG 18766 / IAM 14443 / JCM 21226 / LMG 7866 / NBRC 102419 / NCTC 12128 / CDC 0568-73).